We begin with the raw amino-acid sequence, 115 residues long: Putative UPF0377 protein YHL045W (115 aa).

The helical transmembrane segment at 10–30 (ACIFIDSVCEGIVFWGLCLFV) threads the bilayer.

The protein belongs to the UPF0377 family.

It is found in the membrane. The chain is Putative UPF0377 protein YHL045W from Saccharomyces cerevisiae (strain ATCC 204508 / S288c) (Baker's yeast).